A 782-amino-acid polypeptide reads, in one-letter code: E3 UFM1-protein ligase 1 homolog (782 aa).

The disordered stretch occupies residues 405–478 (VSTQELEDDG…TRGGGGASKK (74 aa)).

The protein belongs to the UFL1 family.

Its function is as follows. E3 UFM1-protein ligase that mediates ufmylation of target proteins. The sequence is that of E3 UFM1-protein ligase 1 homolog from Drosophila sechellia (Fruit fly).